The following is a 318-amino-acid chain: Olfactory receptor 13C5 (318 aa).

Topologically, residues 1–25 (MEWENHTILVEFFLKGLSGHPRLEL) are extracellular. Residue asparagine 5 is glycosylated (N-linked (GlcNAc...) asparagine). The helical transmembrane segment at 26-46 (LFFVLIFIMYVVILLGNGTLI) threads the bilayer. Topologically, residues 47–54 (LISILDPH) are cytoplasmic. Residues 55 to 75 (LHTPMYFFLGNLSFLDICYTT) traverse the membrane as a helical segment. The Extracellular portion of the chain corresponds to 76-99 (TSIPSTLVSFLSERKTISLSGCAV). Cysteine 97 and cysteine 189 form a disulfide bridge. A helical transmembrane segment spans residues 100–120 (QMFLSLAMGTTECVLLGVMAF). Residues 121-139 (DRYVAICNPLRYPIIMSKD) are Cytoplasmic-facing. The helical transmembrane segment at 140–160 (AYVPMAAGSWIIGAVNSAVQT) threads the bilayer. At 161 to 197 (VFVVQLPFCRNNIINHFTCEILAVMKLACADISGNEF) the chain is on the extracellular side. Residues 198-217 (ILLVTTTLFLLTPLLLIIVS) form a helical membrane-spanning segment. The Cytoplasmic segment spans residues 218 to 237 (YTLIILSIFKISSSEGRSKP). Residues 238-258 (SSTCSARLTVVITFCGTIFLM) form a helical membrane-spanning segment. Residues 259–277 (YMKPKSQETLNSDDLDATD) lie on the Extracellular side of the membrane. Residues 278-298 (KLIFIFYRVMTPMMNPLIYSL) traverse the membrane as a helical segment. The Cytoplasmic portion of the chain corresponds to 299-318 (RNKDVKEAVKHLLRRKNFNK).

Belongs to the G-protein coupled receptor 1 family.

It localises to the cell membrane. Odorant receptor. The sequence is that of Olfactory receptor 13C5 (OR13C5) from Homo sapiens (Human).